The chain runs to 159 residues: MKITILAVGKLKEKYWKQAISEYEKRLSAYSKIEIIEVPDEKAPENMSDKEIEQVKEKEGQRLLAKIKPQATVITLEIQGKMLSSEGLAEEMQRRMTQGQSDFVFVIGGSNGLHENVLQRSNYALSFSKMTFPHQMMRVVLIEQVYRAFKIMRGEAYHK.

Residues Leu-76, Gly-108, and 127 to 132 (FSKMTF) each bind S-adenosyl-L-methionine.

Belongs to the RNA methyltransferase RlmH family. Homodimer.

It localises to the cytoplasm. The enzyme catalyses pseudouridine(1915) in 23S rRNA + S-adenosyl-L-methionine = N(3)-methylpseudouridine(1915) in 23S rRNA + S-adenosyl-L-homocysteine + H(+). Its function is as follows. Specifically methylates the pseudouridine at position 1915 (m3Psi1915) in 23S rRNA. This is Ribosomal RNA large subunit methyltransferase H from Staphylococcus haemolyticus (strain JCSC1435).